We begin with the raw amino-acid sequence, 467 residues long: Megakaryocyte-associated tyrosine-protein kinase (467 aa).

Residues 1–20 form a disordered region; the sequence is MPTQRWAPGTQCMTKCENSR. Positions 7–69 constitute an SH3 domain; the sequence is APGTQCMTKC…AAAALRQREA (63 aa). Positions 81 to 170 constitute an SH2 domain; it reads WFHGKISGQE…AICTKLVKPK (90 aa). In terms of domain architecture, Protein kinase spans 194–443; that stretch reads LTLGAQIGEG…IVEKLGRELR (250 aa). ATP is bound by residues 200-208 and K221; that span reads IGEGEFGAV. D311 serves as the catalytic Proton acceptor. A disordered region spans residues 445-467; sequence VGVAAPAGGQEAEGSAPTRSQDP.

It belongs to the protein kinase superfamily. Tyr protein kinase family. CSK subfamily. Interacts with KIT. As to expression, enriched in lymphoid tissues.

It is found in the cytoplasm. Its subcellular location is the membrane. The catalysed reaction is L-tyrosyl-[protein] + ATP = O-phospho-L-tyrosyl-[protein] + ADP + H(+). Could play a significant role in the signal transduction of hematopoietic cells. May regulate tyrosine kinase activity of SRC-family members in brain. The sequence is that of Megakaryocyte-associated tyrosine-protein kinase (Matk) from Rattus norvegicus (Rat).